Here is a 356-residue protein sequence, read N- to C-terminus: MIQELFRKDIKDFRPYDAKGEKYKIKLDANESFIGLSKEIKNKIIRSLIELEFNNYPDPDATKLKKAYGDYIGIDEKNIMVGNGSDELIQILTNAFLDKNEKIVTLNPDFSMYEVYTKVRGGKVSVFDLDEDFKLNVNKIIEYINEEKPKMFIFSNPNNPTGGVIPKYDIIKIIENVNCIVVVDEAYMEFYGDSILDYIKKYDNLIVLRTASKAIGSAALRLGFLITNDTLLREIKKVKPPFNVNSVSQVIGEIILKDKDFIRESIDKVLYERNYLLKELKKIDGLKVYETKSNFVLIYNENANEINESLIKIGIKVRSFTDENLKNFIRITVGSREQNIEVINCIKGDNYDYKEM.

An N6-(pyridoxal phosphate)lysine modification is found at Lys-213.

This sequence belongs to the class-II pyridoxal-phosphate-dependent aminotransferase family. Histidinol-phosphate aminotransferase subfamily. As to quaternary structure, homodimer. Pyridoxal 5'-phosphate is required as a cofactor.

It catalyses the reaction L-histidinol phosphate + 2-oxoglutarate = 3-(imidazol-4-yl)-2-oxopropyl phosphate + L-glutamate. The protein operates within amino-acid biosynthesis; L-histidine biosynthesis; L-histidine from 5-phospho-alpha-D-ribose 1-diphosphate: step 7/9. This Clostridium novyi (strain NT) protein is Histidinol-phosphate aminotransferase.